The sequence spans 240 residues: Uridylate kinase (240 aa).

Position 13-16 (13-16 (KASG)) interacts with ATP. Residues 21-26 (GSQGFG) are involved in allosteric activation by GTP. Position 55 (Gly55) interacts with UMP. ATP-binding residues include Gly56 and Arg60. Residues Asp75 and 136 to 143 (TGNPFFTT) each bind UMP. ATP contacts are provided by Thr163, Gln164, Tyr169, and Asp172.

This sequence belongs to the UMP kinase family. Homohexamer.

The protein resides in the cytoplasm. It catalyses the reaction UMP + ATP = UDP + ADP. It participates in pyrimidine metabolism; CTP biosynthesis via de novo pathway; UDP from UMP (UMPK route): step 1/1. Its activity is regulated as follows. Allosterically activated by GTP. Inhibited by UTP. In terms of biological role, catalyzes the reversible phosphorylation of UMP to UDP. The protein is Uridylate kinase of Brucella abortus biovar 1 (strain 9-941).